The primary structure comprises 273 residues: MSAAPRIGILGAGGRMGRTLIQAVQQAGYQLAAAVERPESSLVGTDAGELAGIGSVGVKVSGSLADVLKDCDVIIDFTAPAATAQHLKLCREAGVAMVIGTTGMSDEQKAELDEAATHTPVVYAANYSVGVNVSIKLLELAAKVFGDTVDIEVIEAHHRHKVDAPSGTALMMGEAIADTLGRNLKEVAVYGREGHTGPRDRQTIGFETIRGGDIVGEHTVMFIGEGERVEVTHKATNRMNFAAGAVRAAAWVVGREARKYDMKDVLGLNDVQV.

NAD(+) contacts are provided by residues 11–16 (GAGGRM) and E36. Residue R37 participates in NADP(+) binding. Residues 100–102 (GTT) and 124–127 (AANY) contribute to the NAD(+) site. Catalysis depends on H157, which acts as the Proton donor/acceptor. (S)-2,3,4,5-tetrahydrodipicolinate is bound at residue H158. K161 (proton donor) is an active-site residue. Position 167–168 (167–168 (GT)) interacts with (S)-2,3,4,5-tetrahydrodipicolinate.

This sequence belongs to the DapB family.

It is found in the cytoplasm. The enzyme catalyses (S)-2,3,4,5-tetrahydrodipicolinate + NAD(+) + H2O = (2S,4S)-4-hydroxy-2,3,4,5-tetrahydrodipicolinate + NADH + H(+). It carries out the reaction (S)-2,3,4,5-tetrahydrodipicolinate + NADP(+) + H2O = (2S,4S)-4-hydroxy-2,3,4,5-tetrahydrodipicolinate + NADPH + H(+). It functions in the pathway amino-acid biosynthesis; L-lysine biosynthesis via DAP pathway; (S)-tetrahydrodipicolinate from L-aspartate: step 4/4. Its function is as follows. Catalyzes the conversion of 4-hydroxy-tetrahydrodipicolinate (HTPA) to tetrahydrodipicolinate. This chain is 4-hydroxy-tetrahydrodipicolinate reductase, found in Acinetobacter baumannii (strain ACICU).